Reading from the N-terminus, the 278-residue chain is 4-deoxy-L-threo-5-hexosulose-uronate ketol-isomerase (278 aa).

The Zn(2+) site is built by H196, H198, E203, and H245.

It belongs to the KduI family. As to quaternary structure, homohexamer. The cofactor is Zn(2+).

The catalysed reaction is 5-dehydro-4-deoxy-D-glucuronate = 3-deoxy-D-glycero-2,5-hexodiulosonate. Its pathway is glycan metabolism; pectin degradation; 2-dehydro-3-deoxy-D-gluconate from pectin: step 4/5. In terms of biological role, catalyzes the isomerization of 5-dehydro-4-deoxy-D-glucuronate to 3-deoxy-D-glycero-2,5-hexodiulosonate. The chain is 4-deoxy-L-threo-5-hexosulose-uronate ketol-isomerase from Escherichia coli O139:H28 (strain E24377A / ETEC).